The primary structure comprises 204 residues: Ribosomal RNA small subunit methyltransferase G (204 aa).

Glycine 73, phenylalanine 78, and arginine 139 together coordinate S-adenosyl-L-methionine.

The protein belongs to the methyltransferase superfamily. RNA methyltransferase RsmG family.

Its subcellular location is the cytoplasm. The enzyme catalyses guanosine(527) in 16S rRNA + S-adenosyl-L-methionine = N(7)-methylguanosine(527) in 16S rRNA + S-adenosyl-L-homocysteine. Specifically methylates the N7 position of guanine in position 527 of 16S rRNA. This chain is Ribosomal RNA small subunit methyltransferase G, found in Coxiella burnetii (strain CbuG_Q212) (Coxiella burnetii (strain Q212)).